The sequence spans 551 residues: Formate--tetrahydrofolate ligase (551 aa).

Thr-61–Ser-68 is a binding site for ATP.

Belongs to the formate--tetrahydrofolate ligase family.

The enzyme catalyses (6S)-5,6,7,8-tetrahydrofolate + formate + ATP = (6R)-10-formyltetrahydrofolate + ADP + phosphate. It participates in one-carbon metabolism; tetrahydrofolate interconversion. This chain is Formate--tetrahydrofolate ligase, found in Lactiplantibacillus plantarum (strain ATCC BAA-793 / NCIMB 8826 / WCFS1) (Lactobacillus plantarum).